A 285-amino-acid chain; its full sequence is NADH-dependent oxidoreductase ucdB (285 aa).

Thr87 serves as a coordination point for NAD(+). The active site involves Lys156.

It belongs to the HIBADH-related family. NP60 subfamily.

Its pathway is secondary metabolite biosynthesis. In terms of biological role, nonribosomal peptide synthetase that mediates the biosynthesis of usterphenyllins and uscandidusins, p-terphenyl derivatives. Within the pathway, ucdB alone catalyzes both reduction and dehydration of atromentin to form a terphenyl triol intermediate. The pathway begin with the biosynthesis of 4-hydroxyphenylpyruvate (HPPA) from L-tyrosine, possibly by the aminotransferase ucdG. The nonribosomal peptide synthetase ucdA then condenses two HPPA units to produce atromentin. The key step in this pathway is the reduction and dehydration of atromentin to form a terphenyl triol intermediate, performed by the NAD-dependent dehydrogenase ucdB. Further O-methylation by the methyltransferase ucdC forms terphenyllin carrying two methoxy moieties at C-9 and C-12, and subsequent dihydroxylation at C-3 of ring A and C-15 of ring C by the flavin-dependent oxygenase ucdD leads to 3,15-dihydroxyterphenyllin. Prenylation by ucdE at position C-5 of ring A forms usterphenyllin B, and is followed by a second prenylation at position C-14 of ring C to form usterphenyllin A. The following furan ring formation that leads to uscandidusins A and B was proven to be an unexpected spontaneous non-enzymatic reaction. The chain is NADH-dependent oxidoreductase ucdB from Aspergillus ustus.